Consider the following 117-residue polypeptide: Glycine cleavage system H-like protein (117 aa).

A Lipoyl-binding domain is found at 21 to 103; that stretch reads IVRLGLSSRM…ESEGWFVVLQ (83 aa). The residue at position 62 (Lys-62) is an N6-lipoyllysine.

Belongs to the GcvH family. Requires (R)-lipoate as cofactor.

In Chlamydia muridarum (strain MoPn / Nigg), this protein is Glycine cleavage system H-like protein.